A 435-amino-acid polypeptide reads, in one-letter code: Adenylosuccinate synthetase (435 aa).

GTP-binding positions include 17 to 23 (GDEGKGK) and 45 to 47 (GHT). D18 serves as the catalytic Proton acceptor. Positions 18 and 45 each coordinate Mg(2+). IMP contacts are provided by residues 18–21 (DEGK), 43–46 (NAGH), T134, R148, Q229, T244, and R308. The active-site Proton donor is H46. Substrate is bound at residue 304-310 (SVTGRPR). GTP contacts are provided by residues R310, 336–338 (KLD), and 418–420 (STG).

This sequence belongs to the adenylosuccinate synthetase family. As to quaternary structure, homodimer. Mg(2+) is required as a cofactor.

It is found in the cytoplasm. It catalyses the reaction IMP + L-aspartate + GTP = N(6)-(1,2-dicarboxyethyl)-AMP + GDP + phosphate + 2 H(+). The protein operates within purine metabolism; AMP biosynthesis via de novo pathway; AMP from IMP: step 1/2. In terms of biological role, plays an important role in the de novo pathway of purine nucleotide biosynthesis. Catalyzes the first committed step in the biosynthesis of AMP from IMP. This Bordetella pertussis (strain Tohama I / ATCC BAA-589 / NCTC 13251) protein is Adenylosuccinate synthetase.